Here is a 502-residue protein sequence, read N- to C-terminus: ATP synthase subunit alpha (502 aa).

Residues 115–134 form a disordered region; it reads IDGQGPINTTKTRPVEQKAT. 169 to 176 contacts ATP; the sequence is GDRQTGKT.

The protein belongs to the ATPase alpha/beta chains family. F-type ATPases have 2 components, CF(1) - the catalytic core - and CF(0) - the membrane proton channel. CF(1) has five subunits: alpha(3), beta(3), gamma(1), delta(1), epsilon(1). CF(0) has three main subunits: a(1), b(2) and c(9-12). The alpha and beta chains form an alternating ring which encloses part of the gamma chain. CF(1) is attached to CF(0) by a central stalk formed by the gamma and epsilon chains, while a peripheral stalk is formed by the delta and b chains.

It is found in the cell membrane. The enzyme catalyses ATP + H2O + 4 H(+)(in) = ADP + phosphate + 5 H(+)(out). Functionally, produces ATP from ADP in the presence of a proton gradient across the membrane. The alpha chain is a regulatory subunit. The sequence is that of ATP synthase subunit alpha from Staphylococcus haemolyticus (strain JCSC1435).